We begin with the raw amino-acid sequence, 610 residues long: Glutamine--fructose-6-phosphate aminotransferase [isomerizing] (610 aa).

The active-site Nucleophile; for GATase activity is C2. Residues 2 to 218 (CGIVGAVAQR…EGDVAEITRR (217 aa)) enclose the Glutamine amidotransferase type-2 domain. 2 consecutive SIS domains span residues 286-426 (AAEI…QQGR) and 459-600 (LATD…VDQP). K605 functions as the For Fru-6P isomerization activity in the catalytic mechanism.

As to quaternary structure, homodimer.

The protein resides in the cytoplasm. The catalysed reaction is D-fructose 6-phosphate + L-glutamine = D-glucosamine 6-phosphate + L-glutamate. Its function is as follows. Catalyzes the first step in hexosamine metabolism, converting fructose-6P into glucosamine-6P using glutamine as a nitrogen source. This is Glutamine--fructose-6-phosphate aminotransferase [isomerizing] from Vibrio vulnificus (strain CMCP6).